Reading from the N-terminus, the 569-residue chain is MAATRVRCCHSNAAFTRLPLTRHRNSPTLPISLNRVDFPTLKKLSLPIGDGSSIRKVSGSGSRNIVRAVLEEKKTEAITEVDEKGITCVMKFGGSSVASAERMKEVADLILTFPEESPVIVLSAMGKTTNNLLLAGEKAVSCGVSNASEIEELSIIKELHIRTVKELNIDPSVILTYLEELEQLLKGIAMMKELTLRTRDYLVSFGECLSTRIFAAYLNTIGVKARQYDAFEIGFITTDDFTNGDILEATYPAVAKRLYDDWMHDPAVPIVTGFLGKGWKTGAVTTLGRGGSDLTATTIGKALGLKEIQVWKDVDGVLTCDPTIYKRATPVPYLTFDEAAELAYFGAQVLHPQSMRPAREGEIPVRVKNSYNPKAPGTIITKTRDMTKSILTSIVLKRNVTMLDIASTRMLGQVGFLAKVFSIFEELGISVDVVATSEVSISLTLDPSKLWSRELIQQELDHVVEELEKIAVVNLLKGRAIISLIGNVQHSSLILERAFHVLYTKGVNVQMISQGASKVNISFIVNEAEAEGCVQALHKSFFESGDLSELLIQPRLGNGSPVRTLQVEN.

A chloroplast-targeting transit peptide spans M1–M90. ATP-binding residues include K91, G94, and S123. A substrate-binding site is contributed by E207. 2 ACT domains span residues I405–S483 and L484–S560. L-lysine is bound by residues Q413 and G415. S430 lines the S-adenosyl-L-methionine pocket. The L-lysine site is built by V431, D432, and S437. Residues S452 and R453 each contribute to the S-adenosyl-L-methionine site.

The protein belongs to the aspartokinase family. In terms of assembly, homodimer.

Its subcellular location is the plastid. The protein resides in the chloroplast. The enzyme catalyses L-aspartate + ATP = 4-phospho-L-aspartate + ADP. It functions in the pathway amino-acid biosynthesis; L-lysine biosynthesis via DAP pathway; (S)-tetrahydrodipicolinate from L-aspartate: step 1/4. Its pathway is amino-acid biosynthesis; L-methionine biosynthesis via de novo pathway; L-homoserine from L-aspartate: step 1/3. The protein operates within amino-acid biosynthesis; L-threonine biosynthesis; L-threonine from L-aspartate: step 1/5. Inhibited by S-adenosyl-L-methionine (SAM) and lysine in a synergistic manner. No inhibition by threonine, leucine or SAM alone, and no activation or inhibition by alanine, cysteine, isoleucine, serine, valine, methionine, glutamine, asparagine, glutamic acid or arginine. Its function is as follows. Involved in the first step of essential amino acids lysine, threonine, methionine and isoleucine synthesis via the aspartate-family pathway. In Arabidopsis thaliana (Mouse-ear cress), this protein is Aspartokinase 1, chloroplastic (AK1).